A 401-amino-acid polypeptide reads, in one-letter code: Acetate kinase (401 aa).

Position 9 (Asn9) interacts with Mg(2+). Lys16 is an ATP binding site. Position 88 (Arg88) interacts with substrate. Asp147 functions as the Proton donor/acceptor in the catalytic mechanism. Residues 207 to 211, 282 to 284, and 333 to 337 each bind ATP; these read HLGNG, DCR, and GIGEN. Residue Glu388 coordinates Mg(2+).

Belongs to the acetokinase family. In terms of assembly, homodimer. Requires Mg(2+) as cofactor. The cofactor is Mn(2+).

The protein resides in the cytoplasm. It catalyses the reaction acetate + ATP = acetyl phosphate + ADP. It functions in the pathway metabolic intermediate biosynthesis; acetyl-CoA biosynthesis; acetyl-CoA from acetate: step 1/2. Its function is as follows. Catalyzes the formation of acetyl phosphate from acetate and ATP. Can also catalyze the reverse reaction. This chain is Acetate kinase, found in Haemophilus influenzae (strain PittGG).